Reading from the N-terminus, the 428-residue chain is Histidine--tRNA ligase (428 aa).

This sequence belongs to the class-II aminoacyl-tRNA synthetase family. Homodimer.

It is found in the cytoplasm. It catalyses the reaction tRNA(His) + L-histidine + ATP = L-histidyl-tRNA(His) + AMP + diphosphate + H(+). The polypeptide is Histidine--tRNA ligase (hisS) (Chlamydia muridarum (strain MoPn / Nigg)).